An 85-amino-acid polypeptide reads, in one-letter code: uncharacterized protein (85 aa).

2 disordered regions span residues 1–28 and 35–54; these read MPQK…LRKA and SKKK…SLTE. Basic residues predominate over residues 35–48; sequence SKKKSLQHLKKLKK.

It localises to the nucleus. This is an uncharacterized protein from Saccharomyces cerevisiae (strain ATCC 204508 / S288c) (Baker's yeast).